A 278-amino-acid chain; its full sequence is Nudix hydrolase 2 (278 aa).

A Nudix hydrolase domain is found at 110 to 242; that stretch reads SHRVGIGAFV…ELLRYMTDIC (133 aa). A Nudix box motif is present at residues 147–168; that stretch reads GVVNEGEDIHDGSVREVKEETG. Glutamate 162 serves as a coordination point for Mg(2+). Glutamate 165 serves as the catalytic Proton acceptor. Glutamate 166 lines the Mg(2+) pocket.

It belongs to the Nudix hydrolase family. Requires Mg(2+) as cofactor. Mn(2+) is required as a cofactor. Expressed in roots, stems and leaves.

The enzyme catalyses ADP-D-ribose + H2O = D-ribose 5-phosphate + AMP + 2 H(+). The catalysed reaction is NAD(+) + H2O = beta-nicotinamide D-ribonucleotide + AMP + 2 H(+). It carries out the reaction NADH + H2O = reduced beta-nicotinamide D-ribonucleotide + AMP + 2 H(+). Functionally, probably mediates the hydrolysis of some nucleoside diphosphate derivatives. In vitro, it can use both NADH and ADP-ribose as substrates; however the relevance of such substrates in vivo is unclear. Confers tolerance to oxidative stress. In Arabidopsis thaliana (Mouse-ear cress), this protein is Nudix hydrolase 2.